The sequence spans 98 residues: Co-chaperonin GroES (98 aa).

Belongs to the GroES chaperonin family. As to quaternary structure, heptamer of 7 subunits arranged in a ring. Interacts with the chaperonin GroEL.

The protein localises to the cytoplasm. In terms of biological role, together with the chaperonin GroEL, plays an essential role in assisting protein folding. The GroEL-GroES system forms a nano-cage that allows encapsulation of the non-native substrate proteins and provides a physical environment optimized to promote and accelerate protein folding. GroES binds to the apical surface of the GroEL ring, thereby capping the opening of the GroEL channel. This Corynebacterium diphtheriae (strain ATCC 700971 / NCTC 13129 / Biotype gravis) protein is Co-chaperonin GroES.